We begin with the raw amino-acid sequence, 421 residues long: ATP-dependent RNA helicase RhlB (421 aa).

Positions 9–37 match the Q motif motif; sequence QKFSDFALHPKVVEALEKKGFHNCTPIQA. Residues 40-219 enclose the Helicase ATP-binding domain; it reads LPLTLAGRDV…FEQMNNAEYI (180 aa). Residue 53 to 60 coordinates ATP; it reads AQTGTGKT. The short motif at 165–168 is the DEAD box element; sequence DEAD. Residues 245–390 form the Helicase C-terminal domain; it reads RLLQTLIEEE…VSKYNPDALM (146 aa). Residues 395 to 421 form a disordered region; it reads KPLRLTRARTGNGPRRTGAPRNRRRSG. Positions 402–414 are enriched in low complexity; sequence ARTGNGPRRTGAP.

The protein belongs to the DEAD box helicase family. RhlB subfamily. In terms of assembly, component of the RNA degradosome, which is a multiprotein complex involved in RNA processing and mRNA degradation.

The protein localises to the cytoplasm. The catalysed reaction is ATP + H2O = ADP + phosphate + H(+). DEAD-box RNA helicase involved in RNA degradation. Has RNA-dependent ATPase activity and unwinds double-stranded RNA. The chain is ATP-dependent RNA helicase RhlB from Shigella flexneri serotype 5b (strain 8401).